We begin with the raw amino-acid sequence, 363 residues long: MWRSYKAETPELADETQEVDLNLHDSSESDHEGRQSRSASITSSTSAPASNDVTLQVPITNSSATSPTPSTGSMYFIAGMFDGKEKVNREQPPMPTTDGVEYPRAASWAAGNCANVLNDDKGKQLFRVFLFQSLAEENLAFLEAMEKLKKMKISDEKVAYAKEILETYQGSINLSSSSMKSLRNAVASETLDMEEFAPAIKEVRRLLENDQFPRFRRSELYLEYLEELLPRSYAEKWAQSFEGLLGNHVGRHHFRIFLRSIHAEENLRFWEAVVEFRSSRHKANAMNNLGKVILSTYLAEGTTNEVFLPFGVRQVIERRIQDNQIDITLFDEAIKHVEQVLRNDPYVRFLQSSQYIDLLSKLK.

Residues 1 to 70 (MWRSYKAETP…NSSATSPTPS (70 aa)) are disordered. A compositionally biased stretch (basic and acidic residues) spans 21–35 (LNLHDSSESDHEGRQ). Composition is skewed to low complexity over residues 36 to 50 (SRSA…APAS) and 58 to 70 (PITN…PTPS). 2 consecutive RGS domains span residues 112–225 (NCAN…LEYL) and 240–359 (SFEG…IDLL).

Post-translationally, may be phosphorylated and activated by egl-4.

In terms of biological role, modulates chemotaxis responses by regulating positively the sensitivity to CO2 levels in BAG neurons and by regulating negatively the sensitivity to quinine in ASH sensory neurons. The polypeptide is Regulator of G-protein signaling rgs-3 (rgs-3) (Caenorhabditis elegans).